Here is a 156-residue protein sequence, read N- to C-terminus: Small ribosomal subunit protein uS7 (156 aa).

It belongs to the universal ribosomal protein uS7 family. As to quaternary structure, part of the 30S ribosomal subunit. Contacts proteins S9 and S11.

Functionally, one of the primary rRNA binding proteins, it binds directly to 16S rRNA where it nucleates assembly of the head domain of the 30S subunit. Is located at the subunit interface close to the decoding center, probably blocks exit of the E-site tRNA. The chain is Small ribosomal subunit protein uS7 from Kineococcus radiotolerans (strain ATCC BAA-149 / DSM 14245 / SRS30216).